The primary structure comprises 249 residues: Isoprenyl transferase (249 aa).

The active site involves Asp-25. Residue Asp-25 coordinates Mg(2+). Substrate is bound by residues Gly-26–Arg-29, Trp-30, Arg-38, His-42, and Ser-70–Glu-72. Asn-73 functions as the Proton acceptor in the catalytic mechanism. Residues Trp-74, Arg-76, Arg-197, and Arg-203–Ser-205 contribute to the substrate site. Position 216 (Glu-216) interacts with Mg(2+).

Belongs to the UPP synthase family. As to quaternary structure, homodimer. Mg(2+) serves as cofactor.

In terms of biological role, catalyzes the condensation of isopentenyl diphosphate (IPP) with allylic pyrophosphates generating different type of terpenoids. This is Isoprenyl transferase from Streptococcus mutans serotype c (strain ATCC 700610 / UA159).